Consider the following 574-residue polypeptide: Alpha-mannosidase I MNS5 (574 aa).

The Cytoplasmic segment spans residues 1–9 (MSCPIHPRR). Residues 10-26 (LFLCLLISLTFFVVDPS) form a helical; Signal-anchor for type II membrane protein membrane-spanning segment. Over 27-574 (SQHIEVKKKQ…VGYCGLWNPL (548 aa)) the chain is Lumenal. Asn89, Asn107, and Asn121 each carry an N-linked (GlcNAc...) asparagine glycan. The active-site Proton donor is the Glu134. Asn201 carries an N-linked (GlcNAc...) asparagine glycan. The active site involves Asp274. N-linked (GlcNAc...) asparagine glycosylation occurs at Asn349. The active-site Proton donor is Glu367. Residue Glu388 is part of the active site. Thr471 contacts Ca(2+). N-linked (GlcNAc...) asparagine glycosylation occurs at Asn494.

The protein belongs to the glycosyl hydrolase 47 family. Ca(2+) is required as a cofactor.

Its subcellular location is the endoplasmic reticulum membrane. The protein operates within protein modification; protein glycosylation. Can convert Man(9)GlcNAc(2) and Man(8)GlcNAc(2) into N-glycans with a terminal alpha-1,6-linked Man residue in the C-branch. Functions in the formation of unique N-glycan structures that are specifically recognized by components of the endoplasmic reticulum-associated degradation (ERAD) machinery, which leads to the degradation of misfolded glycoproteins. Most likely generates N-glycan signal on misfolded glycoproteins that is subsequently recognized by OS9. Required for ERAD of the heavily glycosylated and misfolded BRI1 variants BRI1-5 and BRI1-9. Does not seem to play role in N-glycan processing of correctly folded proteins destined for secretion. The polypeptide is Alpha-mannosidase I MNS5 (MNS5) (Arabidopsis thaliana (Mouse-ear cress)).